The primary structure comprises 60 residues: Phycobilisome degradation protein NblA homolog 2 (60 aa).

It to Synechococcus PCC 7942 NblA and some, to chloroplast ycf18.

In Synechocystis sp. (strain ATCC 27184 / PCC 6803 / Kazusa), this protein is Phycobilisome degradation protein NblA homolog 2.